The following is a 502-amino-acid chain: L-arabinose isomerase (502 aa).

Residues Glu306, Glu333, His350, and His449 each contribute to the Mn(2+) site.

The protein belongs to the arabinose isomerase family. It depends on Mn(2+) as a cofactor.

It catalyses the reaction beta-L-arabinopyranose = L-ribulose. It participates in carbohydrate degradation; L-arabinose degradation via L-ribulose; D-xylulose 5-phosphate from L-arabinose (bacterial route): step 1/3. Functionally, catalyzes the conversion of L-arabinose to L-ribulose. The polypeptide is L-arabinose isomerase (Flavobacterium johnsoniae (strain ATCC 17061 / DSM 2064 / JCM 8514 / BCRC 14874 / CCUG 350202 / NBRC 14942 / NCIMB 11054 / UW101) (Cytophaga johnsonae)).